The sequence spans 445 residues: Phosphoglucosamine mutase (445 aa).

The active-site Phosphoserine intermediate is the Ser-102. Mg(2+) contacts are provided by Ser-102, Asp-241, Asp-243, and Asp-245. Position 102 is a phosphoserine (Ser-102).

Belongs to the phosphohexose mutase family. Mg(2+) is required as a cofactor. Post-translationally, activated by phosphorylation.

It carries out the reaction alpha-D-glucosamine 1-phosphate = D-glucosamine 6-phosphate. Its function is as follows. Catalyzes the conversion of glucosamine-6-phosphate to glucosamine-1-phosphate. The protein is Phosphoglucosamine mutase of Edwardsiella ictaluri (strain 93-146).